Reading from the N-terminus, the 91-residue chain is MRNYELTTITRVSSREVTKSEVQDTLNKFSVSVTADEDWGQRKLWHPIKHEEQGIFHHYKCSAEPSAIEKVEKEFLINQNILRSMVVRLDG.

It belongs to the bacterial ribosomal protein bS6 family.

Its function is as follows. Binds together with bS18 to 16S ribosomal RNA. This is Small ribosomal subunit protein bS6 from Leptospira borgpetersenii serovar Hardjo-bovis (strain JB197).